The primary structure comprises 182 residues: Peptidyl-prolyl cis-trans isomerase H (182 aa).

Residues F15–E181 enclose the PPIase cyclophilin-type domain.

Belongs to the cyclophilin-type PPIase family. PPIase H subfamily.

Its subcellular location is the nucleus. The enzyme catalyses [protein]-peptidylproline (omega=180) = [protein]-peptidylproline (omega=0). PPIases accelerate the folding of proteins. It catalyzes the cis-trans isomerization of proline imidic peptide bonds in oligopeptides. The chain is Peptidyl-prolyl cis-trans isomerase H (cyp-3) from Neurospora crassa (strain ATCC 24698 / 74-OR23-1A / CBS 708.71 / DSM 1257 / FGSC 987).